Here is a 395-residue protein sequence, read N- to C-terminus: Acetate kinase (395 aa).

Asn-7 serves as a coordination point for Mg(2+). Lys-14 contacts ATP. Position 88 (Arg-88) interacts with substrate. Catalysis depends on Asp-145, which acts as the Proton donor/acceptor. Residues 205-209, 279-281, and 327-331 each bind ATP; these read HLGNG, DFR, and GIGEN. Glu-381 lines the Mg(2+) pocket.

The protein belongs to the acetokinase family. Homodimer. It depends on Mg(2+) as a cofactor. Requires Mn(2+) as cofactor.

Its subcellular location is the cytoplasm. The enzyme catalyses acetate + ATP = acetyl phosphate + ADP. Its pathway is metabolic intermediate biosynthesis; acetyl-CoA biosynthesis; acetyl-CoA from acetate: step 1/2. Its function is as follows. Catalyzes the formation of acetyl phosphate from acetate and ATP. Can also catalyze the reverse reaction. The chain is Acetate kinase from Campylobacter jejuni subsp. jejuni serotype O:6 (strain 81116 / NCTC 11828).